We begin with the raw amino-acid sequence, 210 residues long: 7-carboxy-7-deazaguanine synthase (210 aa).

Substrate is bound by residues 12–14 (LQG) and Arg27. One can recognise a Radical SAM core domain in the interval 18 to 210 (NAGRPAVFCR…MQTHKYLNIP (193 aa)). [4Fe-4S] cluster contacts are provided by Cys31, Cys46, and Cys49. Position 48–50 (48–50 (FCD)) interacts with S-adenosyl-L-methionine. Thr51 contacts Mg(2+). Position 90 (Thr90) interacts with substrate. S-adenosyl-L-methionine contacts are provided by residues Gly92, 133 to 135 (SPK), and 173 to 176 (QPMD). Substrate is bound at residue Pro210.

This sequence belongs to the radical SAM superfamily. 7-carboxy-7-deazaguanine synthase family. Homodimer. It depends on [4Fe-4S] cluster as a cofactor. S-adenosyl-L-methionine serves as cofactor. The cofactor is Mg(2+).

It carries out the reaction 6-carboxy-5,6,7,8-tetrahydropterin + H(+) = 7-carboxy-7-deazaguanine + NH4(+). Its pathway is purine metabolism; 7-cyano-7-deazaguanine biosynthesis. Functionally, catalyzes the complex heterocyclic radical-mediated conversion of 6-carboxy-5,6,7,8-tetrahydropterin (CPH4) to 7-carboxy-7-deazaguanine (CDG), a step common to the biosynthetic pathways of all 7-deazapurine-containing compounds. The polypeptide is 7-carboxy-7-deazaguanine synthase (Burkholderia multivorans (strain ATCC 17616 / 249)).